We begin with the raw amino-acid sequence, 345 residues long: Phosphoribosylformylglycinamidine cyclo-ligase (345 aa).

This sequence belongs to the AIR synthase family.

Its subcellular location is the cytoplasm. It carries out the reaction 2-formamido-N(1)-(5-O-phospho-beta-D-ribosyl)acetamidine + ATP = 5-amino-1-(5-phospho-beta-D-ribosyl)imidazole + ADP + phosphate + H(+). It functions in the pathway purine metabolism; IMP biosynthesis via de novo pathway; 5-amino-1-(5-phospho-D-ribosyl)imidazole from N(2)-formyl-N(1)-(5-phospho-D-ribosyl)glycinamide: step 2/2. This is Phosphoribosylformylglycinamidine cyclo-ligase from Shewanella frigidimarina (strain NCIMB 400).